The chain runs to 716 residues: Protein C-mannosyl-transferase DPY19L3 (716 aa).

Residues 1 to 43 (MMYIRQRKETKPIEVSEDFPSPKEDVKLEKKLPSGCASGRFWK) are Cytoplasmic-facing. A helical transmembrane segment spans residues 44-64 (ILSSAVGGTVALCIGLLTSVY). Residues 65–154 (LATLHENDLW…RVLPIQKYLE (90 aa)) are Lumenal-facing. Residue Asn-118 is glycosylated (N-linked (GlcNAc...) asparagine). Residues 155–182 (PVYFYIYTLFGLQAVYVTALYITSWLLS) form a helical membrane-spanning segment. Topologically, residues 183-184 (GT) are cytoplasmic. Residues 185–197 (WLSGLLAALWYVT) constitute an intramembrane region (name=3). Over 198-215 (NRIDTTRVEFTIPLRENW) the chain is Cytoplasmic. An intramembrane region (name=4) is located at residues 216–230 (ALPFFAIQIAAITYF). Over 231-239 (LRPNLQPLS) the chain is Cytoplasmic. The helical transmembrane segment at 240–256 (ERLTLLAIFVSTFLFSL) threads the bilayer. Residues 257-262 (TWQFNQ) are Lumenal-facing. Residues 263–279 (FMMLLQALVLFILDSLD) traverse the membrane as a helical segment. At 280–289 (MLPAMKATWL) the chain is on the cytoplasmic side. The chain crosses the membrane as a helical span at residues 290-306 (YGIQISCLLLVCTLQFF). At 307–308 (NS) the chain is on the lumenal side. The helical transmembrane segment at 309–323 (MILGSLLISFNLSVL) threads the bilayer. The Cytoplasmic portion of the chain corresponds to 324–338 (IVRKLQKNLKTGSFL). Residues 339–359 (TRIWKLLLHLLLVFCLTLFLN) form a helical membrane-spanning segment. The Lumenal portion of the chain corresponds to 360–414 (NIIKKVLNLKSDEHIFKFLKAKFGFGATRDFDANLYLCEEAFGLLPLNTFQRLSE). A helical membrane pass occupies residues 415 to 437 (TLLFYAYMFVLVVTVVTASVVAF). The Cytoplasmic segment spans residues 438–465 (HNLSDSTSLKSMDQTRKRAVDLKPEAAY). The chain crosses the membrane as a helical span at residues 466–485 (NLIHTILFGVLALSTMRMKY). Over 486–487 (LW) the chain is Lumenal. A helical transmembrane segment spans residues 488 to 499 (TSHMCVFASFGL). Residues 500–522 (CSSEVWELLLRLVHLCNPKRIWV) are Cytoplasmic-facing. A helical transmembrane segment spans residues 523-539 (LRYLVPVLTLLYLCYKS). The Lumenal portion of the chain corresponds to 540 to 716 (WPGVMDELSE…FHVYKLSRNK (177 aa)). N-linked (GlcNAc...) asparagine glycosylation is present at Asn-704.

The protein belongs to the dpy-19 family.

Its subcellular location is the endoplasmic reticulum membrane. The enzyme catalyses L-tryptophyl-[protein] + a di-trans,poly-cis-dolichyl beta-D-mannosyl phosphate = C-alpha-D-mannosyl-L-tryptophyl-[protein] + a di-trans,poly-cis-dolichyl phosphate + H(+). It participates in protein modification; protein glycosylation. C-mannosyltransferase that mediates C-mannosylation of tryptophan residues on target proteins. The reaction occurs on the luminal side of the endoplasmic reticulum and involves the transfer of a mannose unit from a dolichylphosphate mannose (Dol-P-Man) donor to an acceptor protein containing a WxxW or WxxC consensus sequence. C-mannosylates RSPO1, a Wnt signaling regulator, preferentially at the first Trp residue in the sequence WxxW. C-mannosylates the netrin receptor UNC5A, preferentially at the third tryptophan of WxxWxxWxxC sequence. In Mus musculus (Mouse), this protein is Protein C-mannosyl-transferase DPY19L3 (Dpy19l3).